A 603-amino-acid chain; its full sequence is DNA mismatch repair protein MutL (603 aa).

Over residues 337–347 (ISKKQKEDQKS) the composition is skewed to basic and acidic residues. Positions 337 to 383 (ISKKQKEDQKSEQIQMSFEENKPVKETPTLFSKPTIPEYVPSDEDAP) are disordered.

This sequence belongs to the DNA mismatch repair MutL/HexB family.

This protein is involved in the repair of mismatches in DNA. It is required for dam-dependent methyl-directed DNA mismatch repair. May act as a 'molecular matchmaker', a protein that promotes the formation of a stable complex between two or more DNA-binding proteins in an ATP-dependent manner without itself being part of a final effector complex. The polypeptide is DNA mismatch repair protein MutL (Listeria monocytogenes serotype 4b (strain F2365)).